A 655-amino-acid chain; its full sequence is Probable inactive receptor kinase At1g48480 (655 aa).

The signal sequence occupies residues 1-32 (MRVFFFPNSSMAILSVFLSLLLLSLPLPSTQD). 6 LRR repeats span residues 71 to 95 (SNRV…IFGN), 98 to 120 (QLRT…LSTS), 122 to 144 (NLRH…LFSL), 146 to 169 (HLVR…TNLT), 170 to 192 (KLKT…DLPL), and 194 to 215 (QFNV…RFES). The disordered stretch occupies residues 234-260 (EETVPSQPTSGGNRTPPSVEGSEEKKK). A compositionally biased stretch (polar residues) spans 237–249 (VPSQPTSGGNRTP). A helical transmembrane segment spans residues 269-289 (IAGIVIGCVVGFALIVLILMV). Residues 371 to 646 (RASAEVLGKG…RKMENLRPYS (276 aa)) form the Protein kinase domain. S373 carries the phosphoserine modification. 377-385 (LGKGTFGTA) is an ATP binding site. T394 carries the post-translational modification Phosphothreonine. K399 contacts ATP. A Phosphoserine modification is found at S450. At T526 the chain carries Phosphothreonine. Position 546 is a phosphoserine (S546). Residue T622 is modified to Phosphothreonine.

This sequence belongs to the protein kinase superfamily. In terms of tissue distribution, highly expressed in seedlings and leaves. Lower expression in roots, stems, flowers and siliques. Detected in the vascular tissues of roots, in the trichomes of young rosettes leaves and hydathodes, in the floral abscission zones, in filament apex and stomata cells of anthers, in inflorescence stems and in sepals.

It localises to the cell membrane. The chain is Probable inactive receptor kinase At1g48480 (RKL1) from Arabidopsis thaliana (Mouse-ear cress).